A 73-amino-acid polypeptide reads, in one-letter code: Mucroporin-like peptide (73 aa).

The first 22 residues, 1–22 (MKVKCLLAVFLIVLIAAEHCQA), serve as a signal peptide directing secretion. Residue Lys38 is modified to Lysine amide. A propeptide spanning residues 44-73 (ELGTQFQPRQKNFMRREVDLERLFAEMPDY) is cleaved from the precursor.

The protein belongs to the non-disulfide-bridged peptide (NDBP) superfamily. Short antimicrobial peptide (group 4) family. Expressed by the venom gland.

It is found in the secreted. Its subcellular location is the target cell membrane. Functionally, cationic host defense peptide that have antibacterial activity by breaking membranes. Is more effective on Gram-positive than on Gram-negative bacteria. This Lychas mucronatus (Chinese swimming scorpion) protein is Mucroporin-like peptide.